The chain runs to 154 residues: Melatonin receptor type 1A (154 aa).

At 1–19 the chain is on the cytoplasmic side; sequence YCYICHSLKYDRWYSNRNS. A helical transmembrane segment spans residues 20 to 40; that stretch reads LCCVFLICVLTLVAIVPNLCM. The Extracellular segment spans residues 41-62; the sequence is GTLQYDPRIYSCTFAQSVSSAY. Residues 63 to 83 form a helical membrane-spanning segment; sequence TIAVVVFHFLVPMVIVIFRYL. Over 84-115 the chain is Cytoplasmic; the sequence is RIWVLVLQIRWRAKPENNPRLKPQDFRNFVTM. Residues 116-136 traverse the membrane as a helical segment; that stretch reads FVVFVLFAICWAPLNFIGLAV. Residues 137-149 lie on the Extracellular side of the membrane; sequence ASDPASMAPRIPE.

Belongs to the G-protein coupled receptor 1 family.

The protein resides in the cell membrane. Its function is as follows. High affinity receptor for melatonin. Likely to mediate the reproductive and circadian actions of melatonin. The activity of this receptor is mediated by pertussis toxin sensitive G proteins that inhibit adenylate cyclase activity. This chain is Melatonin receptor type 1A (MTNR1A), found in Sus scrofa (Pig).